A 498-amino-acid polypeptide reads, in one-letter code: Cytochrome c-552 (498 aa).

Residues 1-31 (MKNKERKLKSWQGWLIFSSSMVVVFCLGLLA) form the signal peptide. His-119 is a heme c binding site. Residues Cys-148, Cys-151, and Lys-152 each contribute to the heme site. Heme c-binding residues include Cys-186, Cys-189, His-190, Cys-228, Cys-231, and His-232. Glu-234, Tyr-235, Lys-280, and Gln-282 together coordinate Ca(2+). Position 235 (Tyr-235) interacts with substrate. Residue His-283 participates in substrate binding. The heme c site is built by His-294, Cys-301, Cys-304, His-305, His-319, Cys-332, Cys-335, His-336, and His-411.

It belongs to the cytochrome c-552 family. Ca(2+) serves as cofactor. Requires heme c as cofactor.

The protein resides in the periplasm. It catalyses the reaction 6 Fe(III)-[cytochrome c] + NH4(+) + 2 H2O = 6 Fe(II)-[cytochrome c] + nitrite + 8 H(+). It participates in nitrogen metabolism; nitrate reduction (assimilation). In terms of biological role, catalyzes the reduction of nitrite to ammonia, consuming six electrons in the process. The protein is Cytochrome c-552 of Porphyromonas gingivalis (strain ATCC BAA-308 / W83).